A 348-amino-acid polypeptide reads, in one-letter code: WW domain binding protein 1-like (348 aa).

A helical transmembrane segment spans residues 42–62 (LWWFWLVWTVVIILSCCCVCH). Disordered stretches follow at residues 111–253 (VVNR…RRFT) and 306–348 (CLSS…GSPS). The span at 134–155 (LPPPPQGGPPGGSPPGADPPPQ) shows a compositional bias: pro residues. The segment covering 156–177 (GSQGAQSSPLSGPSRSSTRPPS) has biased composition (low complexity). Position 177 is a phosphoserine (S177). Over residues 220 to 234 (SECKEELLKDSRSER) the composition is skewed to basic and acidic residues. Residues 331 to 348 (NTINEQDSPNSQHSGSPS) are compositionally biased toward polar residues.

Its subcellular location is the membrane. The protein is WW domain binding protein 1-like (Wbp1l) of Mus musculus (Mouse).